A 139-amino-acid chain; its full sequence is Self-incompatibility protein S1 (139 aa).

An N-terminal signal peptide occupies residues 1–19 (MNIFYVIVLLSFFLSKSSG). An N-linked (GlcNAc...) asparagine glycan is attached at N51.

Belongs to the plant self-incompatibility (S1) protein family. Glycosylated (S1b) and unglocosylated (S1a) forms coexist. In terms of tissue distribution, accumulates in the stigma (at protein level).

It is found in the secreted. Exhibits specific pollen self-inhibitory activity thus preventing self-fertilization. In Papaver rhoeas (Common poppy), this protein is Self-incompatibility protein S1.